A 192-amino-acid polypeptide reads, in one-letter code: Nucleoside triphosphate pyrophosphatase (192 aa).

Aspartate 73 functions as the Proton acceptor in the catalytic mechanism.

It belongs to the Maf family. The cofactor is a divalent metal cation.

Its subcellular location is the cytoplasm. The enzyme catalyses a ribonucleoside 5'-triphosphate + H2O = a ribonucleoside 5'-phosphate + diphosphate + H(+). The catalysed reaction is a 2'-deoxyribonucleoside 5'-triphosphate + H2O = a 2'-deoxyribonucleoside 5'-phosphate + diphosphate + H(+). Functionally, nucleoside triphosphate pyrophosphatase. May have a dual role in cell division arrest and in preventing the incorporation of modified nucleotides into cellular nucleic acids. The polypeptide is Nucleoside triphosphate pyrophosphatase (Ehrlichia ruminantium (strain Gardel)).